The sequence spans 78 residues: D-alanyl carrier protein (78 aa).

Positions 1–78 constitute a Carrier domain; that stretch reads MEFKQEVLDV…NIVNKLTELK (78 aa). An O-(pantetheine 4'-phosphoryl)serine modification is found at Ser36.

Belongs to the DltC family. 4'-phosphopantetheine is transferred from CoA to a specific serine of apo-DCP.

It localises to the cytoplasm. It participates in cell wall biogenesis; lipoteichoic acid biosynthesis. In terms of biological role, carrier protein involved in the D-alanylation of lipoteichoic acid (LTA). The loading of thioester-linked D-alanine onto DltC is catalyzed by D-alanine--D-alanyl carrier protein ligase DltA. The DltC-carried D-alanyl group is further transferred to cell membrane phosphatidylglycerol (PG) by forming an ester bond, probably catalyzed by DltD. D-alanylation of LTA plays an important role in modulating the properties of the cell wall in Gram-positive bacteria, influencing the net charge of the cell wall. The protein is D-alanyl carrier protein of Bacillus velezensis (strain DSM 23117 / BGSC 10A6 / LMG 26770 / FZB42) (Bacillus amyloliquefaciens subsp. plantarum).